The following is a 626-amino-acid chain: Chaperone protein HtpG (626 aa).

The a; substrate-binding stretch occupies residues 1-332 (MTNNDTPGMR…TEDLPLNVSR (332 aa)). The segment at 333-546 (EVVQSSKVMA…KDSLDSSMEK (214 aa)) is b. The interval 547–626 (MMKMMHAEMP…ELIEAATMSR (80 aa)) is c.

It belongs to the heat shock protein 90 family. As to quaternary structure, homodimer.

Its subcellular location is the cytoplasm. Its function is as follows. Molecular chaperone. Has ATPase activity. This is Chaperone protein HtpG from Chlorobium phaeobacteroides (strain DSM 266 / SMG 266 / 2430).